The primary structure comprises 148 residues: Large-conductance mechanosensitive channel (148 aa).

A run of 2 helical transmembrane segments spans residues 16-36 and 89-109; these read VMDLAVGVIIGGAFSTIVNSI and GSFITVLINFLILAFIIFLMV.

It belongs to the MscL family. As to quaternary structure, homopentamer.

It is found in the cell inner membrane. Channel that opens in response to stretch forces in the membrane lipid bilayer. May participate in the regulation of osmotic pressure changes within the cell. In Paraburkholderia phytofirmans (strain DSM 17436 / LMG 22146 / PsJN) (Burkholderia phytofirmans), this protein is Large-conductance mechanosensitive channel.